Here is a 195-residue protein sequence, read N- to C-terminus: 3-isopropylmalate dehydratase small subunit (195 aa).

The protein belongs to the LeuD family. LeuD type 1 subfamily. In terms of assembly, heterodimer of LeuC and LeuD.

The catalysed reaction is (2R,3S)-3-isopropylmalate = (2S)-2-isopropylmalate. The protein operates within amino-acid biosynthesis; L-leucine biosynthesis; L-leucine from 3-methyl-2-oxobutanoate: step 2/4. Functionally, catalyzes the isomerization between 2-isopropylmalate and 3-isopropylmalate, via the formation of 2-isopropylmaleate. This Oenococcus oeni (strain ATCC BAA-331 / PSU-1) protein is 3-isopropylmalate dehydratase small subunit.